The following is a 104-amino-acid chain: Matrix Gla protein (104 aa).

The first 19 residues, 1–19 (MKSLLPLAILAALAVATLC), serve as a signal peptide directing secretion. At Glu-21 the chain carries 4-carboxyglutamate. Phosphoserine occurs at positions 22, 25, and 28. The 47-residue stretch at 51-97 (RAKAQKRVQERNKPAYEINREACDDYKLCERYAMVYGYNAAYNRYFR) folds into the Gla domain. Residues Glu-60, Glu-67, and Glu-71 each carry the 4-carboxyglutamate modification. Cys-73 and Cys-79 are joined by a disulfide.

It belongs to the osteocalcin/matrix Gla protein family. Post-translationally, requires vitamin K-dependent gamma-carboxylation for its function.

The protein localises to the secreted. Functionally, associates with the organic matrix of bone and cartilage. Thought to act as an inhibitor of bone formation. The chain is Matrix Gla protein (Mgp) from Mus musculus (Mouse).